Here is a 737-residue protein sequence, read N- to C-terminus: Glycogen [starch] synthase, muscle (737 aa).

Residue Ser8 is modified to Phosphoserine; by AMPK and PKA. A Phosphoserine modification is found at Ser11. UDP is bound at residue Lys39. 2 residues coordinate UDP-alpha-D-glucose: His205 and Arg211. Residues His291, Glu292, Gln294, His297, and Lys301 each coordinate alpha-D-glucose 6-phosphate. Arg331 lines the UDP pocket. Residue Arg331 coordinates UDP-alpha-D-glucose. A Phosphoserine modification is found at Ser412. Residue His501 participates in alpha-D-glucose 6-phosphate binding. UDP-alpha-D-glucose-binding residues include Glu510, Trp512, and Gly513. Residue Thr515 participates in UDP binding. Alpha-D-glucose 6-phosphate contacts are provided by Arg582 and Arg586. A disordered region spans residues 634–737; the sequence is YRYPRPASVP…PTSSLGEERN (104 aa). Ser641, Ser645, Ser649, and Ser652 each carry phosphoserine. Ser653 carries the phosphoserine; by GSK3-alpha and GSK3-beta modification. At Ser657 the chain carries Phosphoserine; by CK2. The segment covering 658–681 has biased composition (acidic residues); the sequence is EDEEDPRNGPLEEDGERYDEDEEA. Basic and acidic residues predominate over residues 682–695; the sequence is AKDRRNIRAPEWPR. A Phosphoserine modification is found at Ser698. Residues 698-714 are compositionally biased toward polar residues; that stretch reads SCTSSTSGSKRNSVDTA. Residue Thr700 is modified to Phosphothreonine. At Ser710 the chain carries Phosphoserine. Residues 715 to 737 show a composition bias toward low complexity; sequence TSSSLSTPSEPLSPTSSLGEERN. A Phosphothreonine modification is found at Thr721. Phosphoserine occurs at positions 727 and 731.

It belongs to the glycosyltransferase 3 family. Part of the GYS1-GYG1 complex, a heterooctamer composed of a tetramer of GYS1 and 2 dimers of GYG1, where each GYS1 protomer binds to one GYG1 subunit (via GYG1 C-terminus); the GYS1 tetramer may dissociate from GYG1 dimers to continue glycogen polymerization on its own. In terms of processing, phosphorylation at Ser-8 by AMPK inactivates the enzyme activity. Primed phosphorylation at Ser-657 (site 5) by CSNK2A1 and CSNK2A2 is required for inhibitory phosphorylation at Ser-641 (site 3a), Ser-645 (site 3b), Ser-649 (site 3c) and Ser-653 (site 4) by GSK3A an GSK3B. Phosphorylated at Ser-641 by DYRK2, leading to inactivation. Phosphorylated at Ser-641 by PASK, leading to inactivation; phosphorylation by PASK is inhibited by glycogen. Dephosphorylation at Ser-641 and Ser-645 by PP1 activates the enzyme. In terms of tissue distribution, expressed in skeletal muscle and most other cell types where glycogen is present.

It catalyses the reaction [(1-&gt;4)-alpha-D-glucosyl](n) + UDP-alpha-D-glucose = [(1-&gt;4)-alpha-D-glucosyl](n+1) + UDP + H(+). It functions in the pathway glycan biosynthesis; glycogen biosynthesis. Its activity is regulated as follows. Allosteric activation by glucose-6-phosphate. Phosphorylation reduces enzyme activity by constraining a tense conformation of the tetramer through inter-subunit interaction. Phosphorylation reduces the activity towards UDP-glucose. When in the non-phosphorylated state, glycogen synthase does not require glucose-6-phosphate as an allosteric activator; when phosphorylated it does. Functionally, glycogen synthase participates in the glycogen biosynthetic process along with glycogenin and glycogen branching enzyme. Extends the primer composed of a few glucose units formed by glycogenin by adding new glucose units to it. In this context, glycogen synthase transfers the glycosyl residue from UDP-Glc to the non-reducing end of alpha-1,4-glucan. In Homo sapiens (Human), this protein is Glycogen [starch] synthase, muscle.